We begin with the raw amino-acid sequence, 428 residues long: Dihydroorotase (428 aa).

Zn(2+)-binding residues include His61 and His63. Substrate-binding positions include 63–65 (HLR) and Asn95. Residues Asp153, His180, and His233 each contribute to the Zn(2+) site. A substrate-binding site is contributed by Asn279. Asp306 serves as a coordination point for Zn(2+). Asp306 is a catalytic residue. Substrate is bound by residues His310 and 324–325 (FG).

The protein belongs to the metallo-dependent hydrolases superfamily. DHOase family. Class I DHOase subfamily. The cofactor is Zn(2+).

It carries out the reaction (S)-dihydroorotate + H2O = N-carbamoyl-L-aspartate + H(+). Its pathway is pyrimidine metabolism; UMP biosynthesis via de novo pathway; (S)-dihydroorotate from bicarbonate: step 3/3. In terms of biological role, catalyzes the reversible cyclization of carbamoyl aspartate to dihydroorotate. The chain is Dihydroorotase from Geobacillus kaustophilus (strain HTA426).